The sequence spans 636 residues: Threonine--tRNA ligase (636 aa).

Positions 1 to 61 (MINITLPDGK…ETDASVVFIT (61 aa)) constitute a TGS domain. Positions 238–528 (DHRKLGTALD…LIEHYAGKFP (291 aa)) are catalytic. Zn(2+)-binding residues include C329, H380, and H505.

It belongs to the class-II aminoacyl-tRNA synthetase family. Homodimer. Requires Zn(2+) as cofactor.

It is found in the cytoplasm. It catalyses the reaction tRNA(Thr) + L-threonine + ATP = L-threonyl-tRNA(Thr) + AMP + diphosphate + H(+). Its function is as follows. Catalyzes the attachment of threonine to tRNA(Thr) in a two-step reaction: L-threonine is first activated by ATP to form Thr-AMP and then transferred to the acceptor end of tRNA(Thr). Also edits incorrectly charged L-seryl-tRNA(Thr). The polypeptide is Threonine--tRNA ligase (Desulfatibacillum aliphaticivorans).